The primary structure comprises 255 residues: Tryptophan synthase alpha chain (255 aa).

Residues glutamate 51 and aspartate 62 each act as proton acceptor in the active site.

Belongs to the TrpA family. In terms of assembly, tetramer of two alpha and two beta chains.

It carries out the reaction (1S,2R)-1-C-(indol-3-yl)glycerol 3-phosphate + L-serine = D-glyceraldehyde 3-phosphate + L-tryptophan + H2O. The protein operates within amino-acid biosynthesis; L-tryptophan biosynthesis; L-tryptophan from chorismate: step 5/5. Functionally, the alpha subunit is responsible for the aldol cleavage of indoleglycerol phosphate to indole and glyceraldehyde 3-phosphate. The sequence is that of Tryptophan synthase alpha chain from Maridesulfovibrio salexigens (strain ATCC 14822 / DSM 2638 / NCIMB 8403 / VKM B-1763) (Desulfovibrio salexigens).